The primary structure comprises 503 residues: Probable cytosol aminopeptidase (503 aa).

Lysine 274 and aspartate 279 together coordinate Mn(2+). The active site involves lysine 286. Mn(2+) is bound by residues aspartate 297, aspartate 356, and glutamate 358. Arginine 360 is a catalytic residue.

Belongs to the peptidase M17 family. The cofactor is Mn(2+).

The protein resides in the cytoplasm. It carries out the reaction Release of an N-terminal amino acid, Xaa-|-Yaa-, in which Xaa is preferably Leu, but may be other amino acids including Pro although not Arg or Lys, and Yaa may be Pro. Amino acid amides and methyl esters are also readily hydrolyzed, but rates on arylamides are exceedingly low.. It catalyses the reaction Release of an N-terminal amino acid, preferentially leucine, but not glutamic or aspartic acids.. Its function is as follows. Presumably involved in the processing and regular turnover of intracellular proteins. Catalyzes the removal of unsubstituted N-terminal amino acids from various peptides. The polypeptide is Probable cytosol aminopeptidase (Burkholderia pseudomallei (strain 1710b)).